We begin with the raw amino-acid sequence, 493 residues long: UDP-N-acetylmuramate--L-alanine ligase (493 aa).

112 to 118 (GTHGKTT) lines the ATP pocket.

The protein belongs to the MurCDEF family.

The protein localises to the cytoplasm. It carries out the reaction UDP-N-acetyl-alpha-D-muramate + L-alanine + ATP = UDP-N-acetyl-alpha-D-muramoyl-L-alanine + ADP + phosphate + H(+). It participates in cell wall biogenesis; peptidoglycan biosynthesis. Functionally, cell wall formation. This chain is UDP-N-acetylmuramate--L-alanine ligase, found in Nitrosospira multiformis (strain ATCC 25196 / NCIMB 11849 / C 71).